Consider the following 122-residue polypeptide: Large ribosomal subunit protein uL14 (122 aa).

It belongs to the universal ribosomal protein uL14 family. In terms of assembly, part of the 50S ribosomal subunit. Forms a cluster with proteins L3 and L19. In the 70S ribosome, L14 and L19 interact and together make contacts with the 16S rRNA in bridges B5 and B8.

Functionally, binds to 23S rRNA. Forms part of two intersubunit bridges in the 70S ribosome. This Mesorhizobium japonicum (strain LMG 29417 / CECT 9101 / MAFF 303099) (Mesorhizobium loti (strain MAFF 303099)) protein is Large ribosomal subunit protein uL14.